A 370-amino-acid chain; its full sequence is 3-dehydroquinate synthase (370 aa).

NAD(+) contacts are provided by residues 70 to 75, 104 to 108, 128 to 129, Lys-141, Lys-150, and 168 to 171; these read DAEDGK, GAATD, TT, and TLET. Positions 183, 246, and 262 each coordinate Zn(2+).

It belongs to the sugar phosphate cyclases superfamily. Dehydroquinate synthase family. The cofactor is Co(2+). Requires Zn(2+) as cofactor. NAD(+) is required as a cofactor.

Its subcellular location is the cytoplasm. The catalysed reaction is 7-phospho-2-dehydro-3-deoxy-D-arabino-heptonate = 3-dehydroquinate + phosphate. The protein operates within metabolic intermediate biosynthesis; chorismate biosynthesis; chorismate from D-erythrose 4-phosphate and phosphoenolpyruvate: step 2/7. Catalyzes the conversion of 3-deoxy-D-arabino-heptulosonate 7-phosphate (DAHP) to dehydroquinate (DHQ). The protein is 3-dehydroquinate synthase of Rhodococcus opacus (strain B4).